The chain runs to 134 residues: Large ribosomal subunit protein eL14z (134 aa).

Belongs to the eukaryotic ribosomal protein eL14 family.

The protein is Large ribosomal subunit protein eL14z (RPL14A) of Arabidopsis thaliana (Mouse-ear cress).